A 104-amino-acid chain; its full sequence is Large ribosomal subunit protein bL21 (104 aa).

Belongs to the bacterial ribosomal protein bL21 family. Part of the 50S ribosomal subunit. Contacts protein L20.

Its function is as follows. This protein binds to 23S rRNA in the presence of protein L20. The polypeptide is Large ribosomal subunit protein bL21 (Streptococcus pneumoniae serotype 2 (strain D39 / NCTC 7466)).